A 368-amino-acid polypeptide reads, in one-letter code: Cyanide hydratase (368 aa).

Residues tyrosine 6 to leucine 285 form the CN hydrolase domain. The Proton acceptor role is filled by glutamate 46. Residue lysine 128 is part of the active site. Residue cysteine 163 is the Nucleophile of the active site. The disordered stretch occupies residues leucine 341–alanine 368.

The protein belongs to the carbon-nitrogen hydrolase superfamily. Nitrilase family. Oligomer of dimers, forming left-handed helical fibers.

It carries out the reaction formamide = hydrogen cyanide + H2O. Catalyzes the hydration of cyanide to formamide. Degradation of cyanide may be important for plant pathogenic fungi in infection of cyanogenic plants. This is Cyanide hydratase from Microdochium sorghi (Zonate leaf spot disease fungus).